Here is a 215-residue protein sequence, read N- to C-terminus: 7-cyano-7-deazaguanine synthase (215 aa).

8-18 (LSAGLDSTVSL) lines the ATP pocket. Residues C191, C199, C202, and C205 each contribute to the Zn(2+) site.

It belongs to the QueC family. As to quaternary structure, homodimer. Zn(2+) serves as cofactor.

It carries out the reaction 7-carboxy-7-deazaguanine + NH4(+) + ATP = 7-cyano-7-deazaguanine + ADP + phosphate + H2O + H(+). It participates in purine metabolism; 7-cyano-7-deazaguanine biosynthesis. Catalyzes the ATP-dependent conversion of 7-carboxy-7-deazaguanine (CDG) to 7-cyano-7-deazaguanine (preQ(0)). The protein is 7-cyano-7-deazaguanine synthase of Carboxydothermus hydrogenoformans (strain ATCC BAA-161 / DSM 6008 / Z-2901).